Here is a 205-residue protein sequence, read N- to C-terminus: Small ribosomal subunit protein uS5 (205 aa).

The region spanning 49 to 112 is the S5 DRBM domain; that stretch reads LVDEVLCIDM…TNAKLNIVKV (64 aa).

The protein belongs to the universal ribosomal protein uS5 family. As to quaternary structure, part of the 30S ribosomal subunit. Contacts protein S4.

Its function is as follows. With S4 and S12 plays an important role in translational accuracy. The sequence is that of Small ribosomal subunit protein uS5 from Methanocorpusculum labreanum (strain ATCC 43576 / DSM 4855 / Z).